Here is a 188-residue protein sequence, read N- to C-terminus: Ribosomal RNA small subunit methyltransferase G (188 aa).

Residues G69, F74, 119-120, and R134 each bind S-adenosyl-L-methionine; that span reads VQ.

This sequence belongs to the methyltransferase superfamily. RNA methyltransferase RsmG family.

The protein localises to the cytoplasm. The enzyme catalyses guanosine(527) in 16S rRNA + S-adenosyl-L-methionine = N(7)-methylguanosine(527) in 16S rRNA + S-adenosyl-L-homocysteine. Its function is as follows. Specifically methylates the N7 position of guanine in position 527 of 16S rRNA. The sequence is that of Ribosomal RNA small subunit methyltransferase G from Campylobacter jejuni subsp. jejuni serotype O:2 (strain ATCC 700819 / NCTC 11168).